Here is a 330-residue protein sequence, read N- to C-terminus: Lymphocyte-specific protein 1 (330 aa).

Composition is skewed to basic and acidic residues over residues methionine 1–aspartate 20 and alanine 37–histidine 62. Disordered stretches follow at residues methionine 1 to leucine 246 and aspartate 281 to serine 302. A compositionally biased stretch (polar residues) spans glutamine 66–serine 77. Serine 77 and serine 78 each carry phosphoserine; by CK2. Residues glutamine 113–glutamate 135 are compositionally biased toward basic and acidic residues. At threonine 166 the chain carries Phosphothreonine. Residues serine 168, serine 179, serine 180, and serine 184 each carry the phosphoserine modification. 2 stretches are compositionally biased toward polar residues: residues valine 206–isoleucine 215 and glutamine 223–proline 242. Serine 243 bears the Phosphoserine; by MAPKAPK2 mark. A compositionally biased stretch (low complexity) spans lysine 291–serine 302. Lysine 318 is subject to N6-acetyllysine.

Phosphorylated by casein kinase II, protein kinase C and MAPKAPK2. Phosphorylation by PKC induces translocation from membrane to cytoplasm. Phosphorylation by MAPKAPK2 may regulate neutrophil chemotaxis. As to expression, isoform 1 is expressed in normal mouse B and T-lymphocytes and in transformed B-cells but not (or in smaller amounts) in nine T-lymphoma lines tested. Isoform 2 is expressed in non-lymphoid cell lines (myocytes, stromal cells, fibroblasts).

It localises to the cell membrane. Its function is as follows. May play a role in mediating neutrophil activation and chemotaxis. The sequence is that of Lymphocyte-specific protein 1 (Lsp1) from Mus musculus (Mouse).